The primary structure comprises 239 residues: Glucosamine-6-phosphate deaminase (239 aa).

Catalysis depends on Asp-62, which acts as the Proton acceptor; for enolization step. The active-site For ring-opening step is Asn-128. The active-site Proton acceptor; for ring-opening step is His-130. The active-site For ring-opening step is Glu-135.

The protein belongs to the glucosamine/galactosamine-6-phosphate isomerase family. NagB subfamily.

It catalyses the reaction alpha-D-glucosamine 6-phosphate + H2O = beta-D-fructose 6-phosphate + NH4(+). It functions in the pathway amino-sugar metabolism; N-acetylneuraminate degradation; D-fructose 6-phosphate from N-acetylneuraminate: step 5/5. Its function is as follows. Catalyzes the reversible isomerization-deamination of glucosamine 6-phosphate (GlcN6P) to form fructose 6-phosphate (Fru6P) and ammonium ion. The protein is Glucosamine-6-phosphate deaminase of Lactobacillus helveticus (strain DPC 4571).